The chain runs to 40 residues: Photosystem II reaction center protein J (40 aa).

A helical transmembrane segment spans residues 8-28; the sequence is IPLWLVGTVTGIPVIGLIGVF.

This sequence belongs to the PsbJ family. PSII is composed of 1 copy each of membrane proteins PsbA, PsbB, PsbC, PsbD, PsbE, PsbF, PsbH, PsbI, PsbJ, PsbK, PsbL, PsbM, PsbT, PsbX, PsbY, PsbZ, Psb30/Ycf12, at least 3 peripheral proteins of the oxygen-evolving complex and a large number of cofactors. It forms dimeric complexes.

Its subcellular location is the plastid. The protein localises to the chloroplast thylakoid membrane. In terms of biological role, one of the components of the core complex of photosystem II (PSII). PSII is a light-driven water:plastoquinone oxidoreductase that uses light energy to abstract electrons from H(2)O, generating O(2) and a proton gradient subsequently used for ATP formation. It consists of a core antenna complex that captures photons, and an electron transfer chain that converts photonic excitation into a charge separation. This Musa acuminata (Banana) protein is Photosystem II reaction center protein J.